A 156-amino-acid polypeptide reads, in one-letter code: Small ribosomal subunit protein uS7 (156 aa).

It belongs to the universal ribosomal protein uS7 family. As to quaternary structure, part of the 30S ribosomal subunit. Contacts proteins S9 and S11.

Its function is as follows. One of the primary rRNA binding proteins, it binds directly to 16S rRNA where it nucleates assembly of the head domain of the 30S subunit. Is located at the subunit interface close to the decoding center, probably blocks exit of the E-site tRNA. This chain is Small ribosomal subunit protein uS7, found in Shouchella clausii (strain KSM-K16) (Alkalihalobacillus clausii).